The primary structure comprises 116 residues: Protein Wnt-5b (116 aa).

A lipid anchor (O-palmitoleoyl serine; by PORCN) is attached at Ser1. Residues Asn69 and Asn83 are each glycosylated (N-linked (GlcNAc...) asparagine). A disulfide bridge links Cys82 with Cys97.

The protein belongs to the Wnt family. Palmitoleoylation is required for efficient binding to frizzled receptors. Depalmitoleoylation leads to Wnt signaling pathway inhibition.

It localises to the secreted. The protein localises to the extracellular space. The protein resides in the extracellular matrix. Ligand for members of the frizzled family of seven transmembrane receptors. Probable developmental protein. May be a signaling molecule which affects the development of discrete regions of tissues. Is likely to signal over only few cell diameters. This is Protein Wnt-5b (WNT-5B) from Plethodon jordani (Red-cheeked salamander).